The primary structure comprises 153 residues: Large ribosomal subunit protein uL22 (153 aa).

The disordered stretch occupies residues 128–153 (ADRRARRAAAKPAASASPAANEGVPA). Residues 137 to 147 (AKPAASASPAA) show a composition bias toward low complexity.

The protein belongs to the universal ribosomal protein uL22 family. In terms of assembly, part of the 50S ribosomal subunit.

Its function is as follows. This protein binds specifically to 23S rRNA; its binding is stimulated by other ribosomal proteins, e.g. L4, L17, and L20. It is important during the early stages of 50S assembly. It makes multiple contacts with different domains of the 23S rRNA in the assembled 50S subunit and ribosome. In terms of biological role, the globular domain of the protein is located near the polypeptide exit tunnel on the outside of the subunit, while an extended beta-hairpin is found that lines the wall of the exit tunnel in the center of the 70S ribosome. The polypeptide is Large ribosomal subunit protein uL22 (Acidiphilium cryptum (strain JF-5)).